A 511-amino-acid chain; its full sequence is Alpha-amylase 1 (511 aa).

The N-terminal stretch at 1–15 (MKFFLLLSLIGFCWA) is a signal peptide. Residue Gln16 is modified to Pyrrolidone carboxylic acid. Intrachain disulfides connect Cys43-Cys101, Cys85-Cys130, and Cys156-Cys175. Positions 115, 173, and 182 each coordinate Ca(2+). Residue Arg210 participates in chloride binding. Asp212 functions as the Nucleophile in the catalytic mechanism. His216 provides a ligand contact to Ca(2+). Catalysis depends on Glu248, which acts as the Proton donor. Positions 313 and 352 each coordinate chloride. 2 disulfides stabilise this stretch: Cys393-Cys399 and Cys465-Cys477.

This sequence belongs to the glycosyl hydrolase 13 family. Monomer. Ca(2+) serves as cofactor. The cofactor is chloride. In terms of tissue distribution, expressed in liver and saliva.

It localises to the secreted. It carries out the reaction Endohydrolysis of (1-&gt;4)-alpha-D-glucosidic linkages in polysaccharides containing three or more (1-&gt;4)-alpha-linked D-glucose units.. The sequence is that of Alpha-amylase 1 (Amy1) from Mus musculus (Mouse).